Consider the following 498-residue polypeptide: Glycylpeptide N-tetradecanoyltransferase 2 (498 aa).

Residues M1–P87 are disordered. Residues E15–T32 show a composition bias toward acidic residues. Residue S38 is modified to Phosphoserine. The segment covering K46 to E57 has biased composition (basic residues). The span at S61–S72 shows a compositional bias: polar residues. Tetradecanoyl-CoA-binding residues include H117, W122, L250, V252, S258, R260, V261, and A262.

This sequence belongs to the NMT family.

The protein localises to the cytoplasm. Its subcellular location is the membrane. It catalyses the reaction N-terminal glycyl-[protein] + tetradecanoyl-CoA = N-tetradecanoylglycyl-[protein] + CoA + H(+). It carries out the reaction N-terminal glycyl-L-lysyl-[protein] + tetradecanoyl-CoA = N-terminal glycyl-(N(6)-tetradecanoyl)-L-lysyl-[protein] + CoA + H(+). Adds a myristoyl group to the N-terminal glycine residue of certain cellular and viral proteins. Also able to mediate N-terminal lysine myristoylation of proteins: catalyzes myristoylation of ARF6 on both 'Gly-2' and 'Lys-3'. Lysine myristoylation is required to maintain ARF6 on membranes during the GTPase cycle. The sequence is that of Glycylpeptide N-tetradecanoyltransferase 2 (NMT2) from Bos taurus (Bovine).